The chain runs to 413 residues: Serine hydroxymethyltransferase (413 aa).

Residues L119 and 123–125 (GHL) each bind (6S)-5,6,7,8-tetrahydrofolate. N6-(pyridoxal phosphate)lysine is present on K228. A (6S)-5,6,7,8-tetrahydrofolate-binding site is contributed by 351–353 (SPF).

The protein belongs to the SHMT family. Homodimer. It depends on pyridoxal 5'-phosphate as a cofactor.

It is found in the cytoplasm. It catalyses the reaction (6R)-5,10-methylene-5,6,7,8-tetrahydrofolate + glycine + H2O = (6S)-5,6,7,8-tetrahydrofolate + L-serine. Its pathway is one-carbon metabolism; tetrahydrofolate interconversion. The protein operates within amino-acid biosynthesis; glycine biosynthesis; glycine from L-serine: step 1/1. Catalyzes the reversible interconversion of serine and glycine with tetrahydrofolate (THF) serving as the one-carbon carrier. This reaction serves as the major source of one-carbon groups required for the biosynthesis of purines, thymidylate, methionine, and other important biomolecules. Also exhibits THF-independent aldolase activity toward beta-hydroxyamino acids, producing glycine and aldehydes, via a retro-aldol mechanism. The sequence is that of Serine hydroxymethyltransferase from Clostridium botulinum (strain 657 / Type Ba4).